The primary structure comprises 173 residues: Alpha-crystallin A chain (173 aa).

At methionine 1 the chain carries N-acetylmethionine. Residues 1–63 (MDVTIQHPWF…RTVLDSGISE (63 aa)) form a required for complex formation with BFSP1 and BFSP2 region. Glutamine 6 is modified (deamidated glutamine; partial). Serine 45 carries the phosphoserine modification. Deamidated glutamine; partial is present on glutamine 50. The sHSP domain occupies 52–162 (LFRTVLDSGI…GHSERAIPVS (111 aa)). N6-acetyllysine is present on lysine 70. Position 90 is a deamidated glutamine; partial (glutamine 90). Residue lysine 99 is modified to N6-acetyllysine. Histidine 100 contacts Zn(2+). Position 101 is a deamidated asparagine; partial (asparagine 101). Residues glutamate 102 and histidine 107 each contribute to the Zn(2+) site. The residue at position 122 (serine 122) is a Phosphoserine. Asparagine 123 carries the post-translational modification Deamidated asparagine; partial. Residues 145 to 173 (KVQSGLDAGHSERAIPVSREEKPSSAPSS) are disordered. Glutamine 147 is subject to Deamidated glutamine; partial. Positions 153 to 167 (GHSERAIPVSREEKP) are enriched in basic and acidic residues. Histidine 154 is a Zn(2+) binding site. A glycan (O-linked (GlcNAc) serine) is linked at serine 162.

It belongs to the small heat shock protein (HSP20) family. Heteromer composed of three CRYAA and one CRYAB subunits. Inter-subunit bridging via zinc ions enhances stability, which is crucial as there is no protein turn over in the lens. Can also form homodimers and homotetramers (dimers of dimers) which serve as the building blocks of homooligomers. Within homooligomers, the zinc-binding motif is created from residues of 3 different molecules. His-100 and Glu-102 from one molecule are ligands of the zinc ion, and His-107 and His-154 residues from additional molecules complete the site with tetrahedral coordination geometry. Part of a complex required for lens intermediate filament formation composed of BFSP1, BFSP2 and CRYAA. Post-translationally, acetylation at Lys-70 may increase chaperone activity. In terms of processing, undergoes age-dependent proteolytical cleavage at the C-terminus.

Its subcellular location is the cytoplasm. The protein localises to the nucleus. In terms of biological role, contributes to the transparency and refractive index of the lens. Acts as a chaperone, preventing aggregation of various proteins under a wide range of stress conditions. Required for the correct formation of lens intermediate filaments as part of a complex composed of BFSP1, BFSP2 and CRYAA. In Oryctolagus cuniculus (Rabbit), this protein is Alpha-crystallin A chain (CRYAA).